The sequence spans 257 residues: Mediator of RNA polymerase II transcription subunit 7 (257 aa).

A disordered region spans residues 33–74; that stretch reads EWQRQQNDEEIETKQEEADDKDEKDNEKQNETQDTVPPGELR. Basic and acidic residues predominate over residues 44–63; the sequence is ETKQEEADDKDEKDNEKQNE.

Belongs to the Mediator complex subunit 7 family. Component of the Mediator complex.

The protein resides in the nucleus. Component of the Mediator complex, a coactivator involved in the regulated transcription of nearly all RNA polymerase II-dependent genes. Mediator functions as a bridge to convey information from gene-specific regulatory proteins to the basal RNA polymerase II transcription machinery. Mediator is recruited to promoters by direct interactions with regulatory proteins and serves as a scaffold for the assembly of a functional preinitiation complex with RNA polymerase II and the general transcription factors. This Scheffersomyces stipitis (strain ATCC 58785 / CBS 6054 / NBRC 10063 / NRRL Y-11545) (Yeast) protein is Mediator of RNA polymerase II transcription subunit 7 (MED7).